The primary structure comprises 383 residues: Vesicle-associated membrane protein-associated protein scs2 (383 aa).

In terms of domain architecture, MSP spans 1-123; sequence MSVECSGELF…SIFDRKIRCV (123 aa). Topologically, residues 1-362 are cytoplasmic; sequence MSVECSGELF…TGASLTESPG (362 aa). Polar residues predominate over residues 127-146; the sequence is KQPPQSADKQVENTSTSNPP. Disordered stretches follow at residues 127–160 and 233–359; these read KQPP…SSVG and ESAS…SLTE. Phosphoserine is present on residues serine 236, serine 237, serine 259, serine 261, and serine 268. The span at 241–263 shows a compositional bias: basic and acidic residues; the sequence is DVARSKVQDIIDNEIPKPSESPR. Over residues 289-300 the composition is skewed to basic and acidic residues; sequence FDTKKNDFDSKL. Positions 347–359 are enriched in polar residues; the sequence is ADPSSSTGASLTE. A helical; Anchor for type IV membrane protein transmembrane segment spans residues 363 to 383; that stretch reads IPPNIVIILCLIFFLIGYLFF.

It belongs to the VAMP-associated protein (VAP) (TC 9.B.17) family. In terms of assembly, interacts (via MSP domain) with duc1 (via FFAT-motif); the interaction is direct and serves to restrict the localization of duc1 to areas of cell membrane-endoplasmic reticulum contact sites, and away from the cell division site. Interacts with epr1.

Its subcellular location is the endoplasmic reticulum membrane. Vesicle-associated membrane protein-associated protein (VAP) implicated in maintaining the cortical endoplasmic reticulum (ER)-plasma membrane (PM) attachment. ER-PM contacts function to modulate the distribution of contractile ring components to ensure robust ring assembly. ER-PM contacts function also in controlling exocytosis and maintenance of cell polarity regulating cell shape. VAPs play an important role in regulating eisosome assembly. VAPs also contribute to ER-phagy by tethering atg8 to the ER membrane, but also by maintaining the ER-plasma membrane contact. Restricts the localization of duc1 away from the site of cell division. This chain is Vesicle-associated membrane protein-associated protein scs2 (scs2), found in Schizosaccharomyces pombe (strain 972 / ATCC 24843) (Fission yeast).